A 480-amino-acid chain; its full sequence is Cytochrome b-c1 complex subunit 1, mitochondrial (480 aa).

Residues 1–34 constitute a mitochondrion transit peptide; that stretch reads MAASAVCRAAGAGTRVLLRTRRSPALLRSSDLRG. K111 and K138 each carry N6-acetyllysine. K163 is modified (N6-acetyllysine; alternate). An N6-succinyllysine; alternate modification is found at K163. At S212 the chain carries Phosphoserine. K248 bears the N6-acetyllysine mark.

Belongs to the peptidase M16 family. UQCRC1/QCR1 subfamily. Component of the ubiquinol-cytochrome c oxidoreductase (cytochrome b-c1 complex, complex III, CIII), a multisubunit enzyme composed of 11 subunits. The complex is composed of 3 respiratory subunits cytochrome b, cytochrome c1 and Rieske protein UQCRFS1, 2 core protein subunits UQCRC1/QCR1 and UQCRC2/QCR2, and 6 low-molecular weight protein subunits UQCRH/QCR6, UQCRB/QCR7, UQCRQ/QCR8, UQCR10/QCR9, UQCR11/QCR10 and subunit 9, the cleavage product of Rieske protein UQCRFS1. The complex exists as an obligatory dimer and forms supercomplexes (SCs) in the inner mitochondrial membrane with NADH-ubiquinone oxidoreductase (complex I, CI) and cytochrome c oxidase (complex IV, CIV), resulting in different assemblies (supercomplex SCI(1)III(2)IV(1) and megacomplex MCI(2)III(2)IV(2)). Interacts with UQCC6. Interacts with STMP1.

Its subcellular location is the mitochondrion inner membrane. Functionally, component of the ubiquinol-cytochrome c oxidoreductase, a multisubunit transmembrane complex that is part of the mitochondrial electron transport chain which drives oxidative phosphorylation. The respiratory chain contains 3 multisubunit complexes succinate dehydrogenase (complex II, CII), ubiquinol-cytochrome c oxidoreductase (cytochrome b-c1 complex, complex III, CIII) and cytochrome c oxidase (complex IV, CIV), that cooperate to transfer electrons derived from NADH and succinate to molecular oxygen, creating an electrochemical gradient over the inner membrane that drives transmembrane transport and the ATP synthase. The cytochrome b-c1 complex catalyzes electron transfer from ubiquinol to cytochrome c, linking this redox reaction to translocation of protons across the mitochondrial inner membrane, with protons being carried across the membrane as hydrogens on the quinol. In the process called Q cycle, 2 protons are consumed from the matrix, 4 protons are released into the intermembrane space and 2 electrons are passed to cytochrome c. The 2 core subunits UQCRC1/QCR1 and UQCRC2/QCR2 are homologous to the 2 mitochondrial-processing peptidase (MPP) subunits beta-MPP and alpha-MPP respectively, and they seem to have preserved their MPP processing properties. May be involved in the in situ processing of UQCRFS1 into the mature Rieske protein and its mitochondrial targeting sequence (MTS)/subunit 9 when incorporated into complex III. Seems to play an important role in the maintenance of proper mitochondrial function in nigral dopaminergic neurons. This Bos taurus (Bovine) protein is Cytochrome b-c1 complex subunit 1, mitochondrial (UQCRC1).